The following is a 342-amino-acid chain: Methylthioribose-1-phosphate isomerase (342 aa).

Residues 44 to 46 (RGA), Arg-87, and Gln-194 contribute to the substrate site. Asp-235 (proton donor) is an active-site residue. 245–246 (NK) is a substrate binding site.

It belongs to the eIF-2B alpha/beta/delta subunits family. MtnA subfamily.

The enzyme catalyses 5-(methylsulfanyl)-alpha-D-ribose 1-phosphate = 5-(methylsulfanyl)-D-ribulose 1-phosphate. The protein operates within amino-acid biosynthesis; L-methionine biosynthesis via salvage pathway; L-methionine from S-methyl-5-thio-alpha-D-ribose 1-phosphate: step 1/6. Functionally, catalyzes the interconversion of methylthioribose-1-phosphate (MTR-1-P) into methylthioribulose-1-phosphate (MTRu-1-P). This chain is Methylthioribose-1-phosphate isomerase, found in Acetivibrio thermocellus (strain ATCC 27405 / DSM 1237 / JCM 9322 / NBRC 103400 / NCIMB 10682 / NRRL B-4536 / VPI 7372) (Clostridium thermocellum).